The following is a 354-amino-acid chain: Rhodopsin (354 aa).

Residues 1–36 (MNGTEGENFYVPMSNKTGVVRNPFEYPQYYLADHWM) are Extracellular-facing. N-linked (GlcNAc...) asparagine glycans are attached at residues asparagine 2 and asparagine 15. The chain crosses the membrane as a helical span at residues 37-61 (FAVLAAYMFFLIITGFPVNFLTLFV). Topologically, residues 62–73 (TIQNKKLRQPLN) are cytoplasmic. A helical membrane pass occupies residues 74-96 (YILLNLAVANLFMVFGGFTTTLI). Over 97 to 110 (TSMNGYFVFGSTGC) the chain is Extracellular. Cysteine 110 and cysteine 187 form a disulfide bridge. A helical transmembrane segment spans residues 111 to 133 (NLEGFFATLGGEISLWSLVVLAI). Residues 134–136 (ERY) carry the 'Ionic lock' involved in activated form stabilization motif. The Cytoplasmic segment spans residues 134-152 (ERYVVVCKPMSNFRFGSQH). A helical transmembrane segment spans residues 153–173 (AIAGVSLTWVMAMACAAPPLV). The Extracellular portion of the chain corresponds to 174-202 (GWSRYIPEGLQCSCGIDYYTPKPEINNVS). A glycan (N-linked (GlcNAc...) asparagine) is linked at asparagine 200. A helical transmembrane segment spans residues 203-224 (FVIYMFVVHFSIPLTIIFFCYG). The Cytoplasmic portion of the chain corresponds to 225–252 (RLVCTVKAAAAQQQESETTQRAEREVTR). Residues 253–274 (MVVIMVIGFLICWLPYASVALY) form a helical membrane-spanning segment. At 275–286 (IFNNQGSEFGPV) the chain is on the extracellular side. Residues 287 to 308 (FMTIPSFFAKSSALYNPLIYIL) form a helical membrane-spanning segment. Lysine 296 carries the N6-(retinylidene)lysine modification. Residues 309 to 354 (MNKQFRNCMITTLCCGKNPFEEEESTSASASKTEASSVSSSQVSPA) are Cytoplasmic-facing. 2 S-palmitoyl cysteine lipidation sites follow: cysteine 322 and cysteine 323. A disordered region spans residues 333 to 354 (STSASASKTEASSVSSSQVSPA). Positions 334-354 (TSASASKTEASSVSSSQVSPA) are enriched in low complexity.

Belongs to the G-protein coupled receptor 1 family. Opsin subfamily. In terms of processing, phosphorylated on some or all of the serine and threonine residues present in the C-terminal region. Post-translationally, contains one covalently linked retinal chromophore.

Its subcellular location is the membrane. It is found in the cell projection. The protein resides in the cilium. It localises to the photoreceptor outer segment. Photoreceptor required for image-forming vision at low light intensity. While most salt water fish species use retinal as chromophore, most freshwater fish use 3-dehydroretinal, or a mixture of retinal and 3-dehydroretinal. Light-induced isomerization of 11-cis to all-trans retinal triggers a conformational change that activates signaling via G-proteins. Subsequent receptor phosphorylation mediates displacement of the bound G-protein alpha subunit by arrestin and terminates signaling. This is Rhodopsin (rho) from Galeus melastomus (Blackmouth catshark).